The sequence spans 632 residues: MEEVDRILIHSLRSCGTEVPEDIQSIRQFNTELIVEAVVRCLRVINPSLGATLSHVLPPGMSAQFRIGTSLAQACQDLGYSSEVGYQTFLYSSEPDIRALLIFLAEKLPRDSSEDAHQPAGKSALLQREIVATIKQQLSLPWLPLSCRIAALRRSQSSCRLHRFHSQPLSLASDPALKSIPNERKEYWQRYLPSVTSQLPHLPSVAASLLERNTSKLSAVQEWEAEWKSQGLASRLSPEDYRSKKQQRLQKRIQEQLRQCAQLLAENHLPSSSSQDLTDMLRAFNLDGGSDQKKGSRFTRTQRFTYQQDPHTLKEQMQRAAEILPKKDAQDADAEQQEISSLQEQIDSIEQEIRGLSESNKLLQLTIGQVEGEVNDMHQSCEEKANVVRVKKRAVELLPDADNNLDKLQTLVDASAQRMANLIGQWESHQARLSDEYMELNRVQQEQEDESSRWMKDAKDLYEKIQGSADEAKRKEELYKQLLSEYESLPKEVSRAAYTQRILEIVSNIKKQKEEITKILSDTKELQKEINNLTGKVDRTFVVTDELVFKDAKKDEPVRKAYKYLAALHENCSQLIQTIEDTGTILREIRDLEEQIETETTKKTLSNLQKILEDYRAIKQENAQLLARTREA.

Coiled-coil stretches lie at residues 243 to 269 (SKKQ…ENHL), 326 to 367 (KKDA…QLTI), 400 to 540 (DADN…VDRT), and 584 to 628 (TILR…LLAR).

Belongs to the CCDC22 family.

The protein resides in the endosome. It localises to the cytoplasm. Its subcellular location is the cytoskeleton. The protein localises to the microtubule organizing center. It is found in the centrosome. Its function is as follows. May be involved in regulation of NF-kappa-B signaling. May be involved in copper-dependent atp7a trafficking between the trans-Golgi network and vesicles in the cell periphery. This Xenopus laevis (African clawed frog) protein is Coiled-coil domain-containing protein 22 (ccdc22).